We begin with the raw amino-acid sequence, 237 residues long: Intracellular ribonuclease LX (237 aa).

The propeptide occupies 1 to 24 (MMKSQKKLLIKIIVVQCLLVLCVT). An RNA-binding site is contributed by Gln-36. An intrachain disulfide couples Cys-42 to Cys-48. Residues His-63, Phe-113, 116–117 (HE), and 120–121 (KH) contribute to the RNA site. Residue His-63 is the Proton donor of the active site. Intrachain disulfides connect Cys-78/Cys-124, Cys-183/Cys-219, and Cys-199/Cys-210. Residue Glu-117 is part of the active site. Catalysis depends on His-121, which acts as the Proton acceptor.

Belongs to the RNase T2 family.

It is found in the cytoplasm. It catalyses the reaction a ribonucleotidyl-ribonucleotide-RNA + H2O = a 3'-end 3'-phospho-ribonucleotide-RNA + a 5'-end dephospho-ribonucleoside-RNA + H(+). This Solanum lycopersicum (Tomato) protein is Intracellular ribonuclease LX (RNALX).